A 215-amino-acid polypeptide reads, in one-letter code: Pyrrolidone-carboxylate peptidase (215 aa).

Active-site residues include E80, C143, and H167.

It belongs to the peptidase C15 family. Homotetramer.

It localises to the cytoplasm. The enzyme catalyses Release of an N-terminal pyroglutamyl group from a polypeptide, the second amino acid generally not being Pro.. Functionally, removes 5-oxoproline from various penultimate amino acid residues except L-proline. The chain is Pyrrolidone-carboxylate peptidase from Bacillus thuringiensis (strain Al Hakam).